The sequence spans 341 residues: Golgi-associated RAB2 interactor protein 1B (341 aa).

This sequence belongs to the GARIN family. In terms of tissue distribution, expressed in testis (at protein level).

The protein resides in the golgi apparatus. RAB2B effector protein required for accurate acrosome formation and normal male fertility. In complex with RAB2A/RAB2B, seems to suppress excessive vesicle trafficking during acrosome formation. The sequence is that of Golgi-associated RAB2 interactor protein 1B from Mus musculus (Mouse).